The following is a 139-amino-acid chain: MLSPKRTKFRKQHRGRMRGMAYRGNNIQFGDYALQAVEPSWITARQIEAARRAMTRYIKRGGKIWIRIFPDKPITMRPAETRMGSGKGNPEFWVAVVKPGRIMFEMNGVAEPIAREAMRLAAQKLPIKTKFITRNEEYI.

This sequence belongs to the universal ribosomal protein uL16 family. As to quaternary structure, part of the 50S ribosomal subunit.

Binds 23S rRNA and is also seen to make contacts with the A and possibly P site tRNAs. The sequence is that of Large ribosomal subunit protein uL16 from Picosynechococcus sp. (strain ATCC 27264 / PCC 7002 / PR-6) (Agmenellum quadruplicatum).